Consider the following 141-residue polypeptide: Hemoglobin subunit alpha (141 aa).

Residues 1–141 form the Globin domain; that stretch reads VLSPDDKKHV…VSTVLTSKYR (141 aa). Residue Ser3 is modified to Phosphoserine. 2 positions are modified to N6-succinyllysine: Lys7 and Lys11. Lys16 is subject to N6-acetyllysine; alternate. At Lys16 the chain carries N6-succinyllysine; alternate. Residue Tyr24 is modified to Phosphotyrosine. Ser35 carries the phosphoserine modification. The residue at position 40 (Lys40) is an N6-succinyllysine. The residue at position 49 (Ser49) is a Phosphoserine. Position 58 (His58) interacts with O2. Heme b is bound at residue His87. Ser102 bears the Phosphoserine mark. A Phosphothreonine modification is found at Thr108. A phosphoserine mark is found at Ser124 and Ser131. 2 positions are modified to phosphothreonine: Thr134 and Thr137. Ser138 bears the Phosphoserine mark.

Belongs to the globin family. As to quaternary structure, heterotetramer of two alpha chains and two beta chains. In terms of tissue distribution, red blood cells.

Functionally, involved in oxygen transport from the lung to the various peripheral tissues. Its function is as follows. Hemopressin acts as an antagonist peptide of the cannabinoid receptor CNR1. Hemopressin-binding efficiently blocks cannabinoid receptor CNR1 and subsequent signaling. The polypeptide is Hemoglobin subunit alpha (HBA) (Theropithecus gelada (Gelada baboon)).